The primary structure comprises 69 residues: Small ribosomal subunit protein bS21 (69 aa).

Residues 49–69 (IESAKRKAEKKKRLFSKKDKA) are disordered.

It belongs to the bacterial ribosomal protein bS21 family.

The polypeptide is Small ribosomal subunit protein bS21 (Leptospira borgpetersenii serovar Hardjo-bovis (strain JB197)).